The primary structure comprises 259 residues: Global transcriptional regulator CodY (259 aa).

The GAF domain stretch occupies residues Met1–Leu155. The segment at residues Ala203–Arg222 is a DNA-binding region (H-T-H motif).

This sequence belongs to the CodY family.

The protein resides in the cytoplasm. In terms of biological role, DNA-binding global transcriptional regulator which is involved in the adaptive response to starvation and acts by directly or indirectly controlling the expression of numerous genes in response to nutrient availability. During rapid exponential growth, CodY is highly active and represses genes whose products allow adaptation to nutrient depletion. The polypeptide is Global transcriptional regulator CodY (Exiguobacterium sibiricum (strain DSM 17290 / CCUG 55495 / CIP 109462 / JCM 13490 / 255-15)).